We begin with the raw amino-acid sequence, 258 residues long: Imidazole glycerol phosphate synthase subunit HisF (258 aa).

Residues D11 and D130 contribute to the active site.

This sequence belongs to the HisA/HisF family. In terms of assembly, heterodimer of HisH and HisF.

It is found in the cytoplasm. The catalysed reaction is 5-[(5-phospho-1-deoxy-D-ribulos-1-ylimino)methylamino]-1-(5-phospho-beta-D-ribosyl)imidazole-4-carboxamide + L-glutamine = D-erythro-1-(imidazol-4-yl)glycerol 3-phosphate + 5-amino-1-(5-phospho-beta-D-ribosyl)imidazole-4-carboxamide + L-glutamate + H(+). The protein operates within amino-acid biosynthesis; L-histidine biosynthesis; L-histidine from 5-phospho-alpha-D-ribose 1-diphosphate: step 5/9. In terms of biological role, IGPS catalyzes the conversion of PRFAR and glutamine to IGP, AICAR and glutamate. The HisF subunit catalyzes the cyclization activity that produces IGP and AICAR from PRFAR using the ammonia provided by the HisH subunit. The protein is Imidazole glycerol phosphate synthase subunit HisF of Shigella sonnei (strain Ss046).